We begin with the raw amino-acid sequence, 86 residues long: Collagen alpha-1(XII) chain (86 aa).

Residues 1–12 show a composition bias toward pro residues; that stretch reads NQPGPPGPPGPP. The tract at residues 1–86 is disordered; the sequence is NQPGPPGPPG…PGRPGDSGIR (86 aa). A hydroxyproline mark is found at P6, P9, P12, P18, P24, P27, P30, P42, P51, P54, P65, P74, P77, and P80. Residues 16-25 are compositionally biased toward gly residues; it reads GEPGPGGRPG. The segment covering 35–50 has biased composition (low complexity); sequence PQGERGLPGEXGERGL. Residues 57 to 71 are compositionally biased toward low complexity; that stretch reads QGESRTGPPGSTGSR.

Belongs to the fibril-associated collagens with interrupted helices (FACIT) family. Trimer of identical chains each containing 190 kDa of non-triple-helical sequences. The triple-helical tail is stabilized by disulfide bonds at each end. Post-translationally, prolines at the third position of the tripeptide repeating unit (G-X-Y) are hydroxylated in some or all of the chains.

It is found in the secreted. It localises to the extracellular space. The protein localises to the extracellular matrix. Its function is as follows. Type XII collagen interacts with type I collagen-containing fibrils, the COL1 domain could be associated with the surface of the fibrils, and the COL2 and NC3 domains may be localized in the perifibrillar matrix. The polypeptide is Collagen alpha-1(XII) chain (COL12A1) (Bos taurus (Bovine)).